The chain runs to 216 residues: MTNITSVNTLVSASKLTCIREERILFDELSFDINAGDIVQIEGPNGAGKTSLLRILAGLSRPYAGQTFYLNEDINRCRDEYNEDLLYLGHLAGVKSELTAEENLNFNLRISGYDDFDTAAILAKVNLAGFEEALAGHLSAGQHRRTALARLWHNDCKVWILDEPFTAIDKKGVEELEQLFIQHADNGGCVILTTHQDMGIIKDDRLRKIRLDYRFV.

Residues 11–216 (VSASKLTCIR…RKIRLDYRFV (206 aa)) enclose the ABC transporter domain. 43 to 50 (GPNGAGKT) is a binding site for ATP.

The protein belongs to the ABC transporter superfamily. CcmA exporter (TC 3.A.1.107) family. In terms of assembly, the complex is composed of two ATP-binding proteins (CcmA) and two transmembrane proteins (CcmB).

It localises to the cell inner membrane. The catalysed reaction is heme b(in) + ATP + H2O = heme b(out) + ADP + phosphate + H(+). Its function is as follows. Part of the ABC transporter complex CcmAB involved in the biogenesis of c-type cytochromes; once thought to export heme, this seems not to be the case, but its exact role is uncertain. Responsible for energy coupling to the transport system. The sequence is that of Cytochrome c biogenesis ATP-binding export protein CcmA from Shewanella sp. (strain MR-7).